Consider the following 168-residue polypeptide: Small ribosomal subunit protein uS5 (168 aa).

One can recognise an S5 DRBM domain in the interval 17 to 80; sequence IEDQLVAVNR…EDGKKKMINV (64 aa).

This sequence belongs to the universal ribosomal protein uS5 family. In terms of assembly, part of the 30S ribosomal subunit. Contacts proteins S4 and S8.

With S4 and S12 plays an important role in translational accuracy. Functionally, located at the back of the 30S subunit body where it stabilizes the conformation of the head with respect to the body. The sequence is that of Small ribosomal subunit protein uS5 from Lactobacillus helveticus (strain DPC 4571).